A 479-amino-acid polypeptide reads, in one-letter code: Lysosomal protective protein (479 aa).

The first 27 residues, 1 to 27 (MFRAALWPPVLLLLQLLLLACAPGGEG), serve as a signal peptide directing secretion. Disulfide bonds link Cys87–Cys361, Cys239–Cys255, Cys240–Cys245, and Cys280–Cys330. Asn144 carries an N-linked (GlcNAc...) asparagine glycan. The active site involves Ser177. N-linked (GlcNAc...) asparagine glycosylation occurs at Asn332. Residues Asp399 and His456 contribute to the active site.

Belongs to the peptidase S10 family. As to quaternary structure, heterodimer of a 32 kDa chain and a 20 kDa chain; disulfide-linked.

It is found in the lysosome. It catalyses the reaction Release of a C-terminal amino acid with broad specificity.. In terms of biological role, protective protein appears to be essential for both the activity of beta-galactosidase and neuraminidase, it associates with these enzymes and exerts a protective function necessary for their stability and activity. This protein is also a carboxypeptidase and can deamidate tachykinins. This is Lysosomal protective protein (CTSA) from Bos taurus (Bovine).